The chain runs to 313 residues: Porphobilinogen deaminase (313 aa).

The residue at position 242 (C242) is an S-(dipyrrolylmethanemethyl)cysteine.

This sequence belongs to the HMBS family. In terms of assembly, monomer. The cofactor is dipyrromethane.

It catalyses the reaction 4 porphobilinogen + H2O = hydroxymethylbilane + 4 NH4(+). The protein operates within porphyrin-containing compound metabolism; protoporphyrin-IX biosynthesis; coproporphyrinogen-III from 5-aminolevulinate: step 2/4. Functionally, tetrapolymerization of the monopyrrole PBG into the hydroxymethylbilane pre-uroporphyrinogen in several discrete steps. The polypeptide is Porphobilinogen deaminase (Pseudomonas aeruginosa (strain UCBPP-PA14)).